The chain runs to 405 residues: Alpha-1-antiproteinase S (405 aa).

An N-terminal signal peptide occupies residues 1–24 (MPSAIPRGLLLLAGLCCLVFGIMA). N-linked (GlcNAc...) asparagine glycans are attached at residues N57, N94, N157, and N258. Positions 360 to 379 (GATMMEFMPMSLPEDLSFNK) are RCL.

Belongs to the serpin family.

The protein resides in the secreted. Inhibits elastase, chymotrypsin, cathepsin G, plasmin, and trypsin. The sequence is that of Alpha-1-antiproteinase S from Cavia porcellus (Guinea pig).